The chain runs to 565 residues: NAD-dependent malic enzyme (565 aa).

Tyrosine 104 (proton donor) is an active-site residue. Arginine 157 contributes to the NAD(+) binding site. Residue lysine 175 is the Proton acceptor of the active site. The a divalent metal cation site is built by glutamate 246, aspartate 247, and aspartate 270. NAD(+)-binding residues include aspartate 270 and asparagine 418.

This sequence belongs to the malic enzymes family. Homotetramer. Mg(2+) serves as cofactor. The cofactor is Mn(2+).

The enzyme catalyses (S)-malate + NAD(+) = pyruvate + CO2 + NADH. The catalysed reaction is oxaloacetate + H(+) = pyruvate + CO2. The sequence is that of NAD-dependent malic enzyme from Salmonella agona (strain SL483).